The chain runs to 359 residues: 3-isopropylmalate dehydrogenase (359 aa).

4 residues coordinate substrate: Arg-97, Arg-107, Arg-135, and Asp-224. Mg(2+) is bound by residues Asp-224, Asp-248, and Asp-252. Residue 282–294 (GSAPDIAGKDIAN) participates in NAD(+) binding.

It belongs to the isocitrate and isopropylmalate dehydrogenases family. LeuB type 1 subfamily. In terms of assembly, homodimer. Mg(2+) is required as a cofactor. Requires Mn(2+) as cofactor.

It localises to the cytoplasm. The enzyme catalyses (2R,3S)-3-isopropylmalate + NAD(+) = 4-methyl-2-oxopentanoate + CO2 + NADH. It participates in amino-acid biosynthesis; L-leucine biosynthesis; L-leucine from 3-methyl-2-oxobutanoate: step 3/4. Catalyzes the oxidation of 3-carboxy-2-hydroxy-4-methylpentanoate (3-isopropylmalate) to 3-carboxy-4-methyl-2-oxopentanoate. The product decarboxylates to 4-methyl-2 oxopentanoate. In Prochlorococcus marinus (strain NATL2A), this protein is 3-isopropylmalate dehydrogenase.